A 431-amino-acid chain; its full sequence is 3-phosphoshikimate 1-carboxyvinyltransferase (431 aa).

Residues lysine 21, serine 22, and arginine 26 each coordinate 3-phosphoshikimate. Lysine 21 is a binding site for phosphoenolpyruvate. Residues glycine 93 and arginine 122 each contribute to the phosphoenolpyruvate site. 3-phosphoshikimate contacts are provided by serine 167, glutamine 169, aspartate 318, and lysine 345. Glutamine 169 is a binding site for phosphoenolpyruvate. Residue aspartate 318 is the Proton acceptor of the active site. Residues arginine 349 and arginine 391 each coordinate phosphoenolpyruvate.

The protein belongs to the EPSP synthase family. As to quaternary structure, monomer.

It is found in the cytoplasm. It carries out the reaction 3-phosphoshikimate + phosphoenolpyruvate = 5-O-(1-carboxyvinyl)-3-phosphoshikimate + phosphate. It functions in the pathway metabolic intermediate biosynthesis; chorismate biosynthesis; chorismate from D-erythrose 4-phosphate and phosphoenolpyruvate: step 6/7. In terms of biological role, catalyzes the transfer of the enolpyruvyl moiety of phosphoenolpyruvate (PEP) to the 5-hydroxyl of shikimate-3-phosphate (S3P) to produce enolpyruvyl shikimate-3-phosphate and inorganic phosphate. This Roseiflexus castenholzii (strain DSM 13941 / HLO8) protein is 3-phosphoshikimate 1-carboxyvinyltransferase.